The sequence spans 1913 residues: Protein TIC 214 (1913 aa).

5 helical membrane-spanning segments follow: residues 18 to 38, 64 to 84, 124 to 144, 172 to 192, and 214 to 234; these read IINS…FSIG, FITG…HLAL, LSIQ…HLML, VGWL…VSWI, and LKSA…VNYL. Disordered stretches follow at residues 245-330, 707-734, and 1605-1652; these read KLNE…ETEE, YTDK…NSDT, and EKED…RKKK. Residues 260–289 are compositionally biased toward basic and acidic residues; it reads KESQKSKESEEERDVEKETTSETKETKQEQ. Over residues 303 to 314 the composition is skewed to acidic residues; the sequence is EKEDPDKIDETE. Residues 315 to 330 show a composition bias toward basic and acidic residues; that stretch reads EIRVNGKEKKKDETEE. The segment covering 718–729 has biased composition (low complexity); the sequence is PNPNTDNTTTEN.

It belongs to the TIC214 family. As to quaternary structure, part of the Tic complex.

Its subcellular location is the plastid. The protein localises to the chloroplast inner membrane. In terms of biological role, involved in protein precursor import into chloroplasts. May be part of an intermediate translocation complex acting as a protein-conducting channel at the inner envelope. This Acorus calamus var. americanus (American sweet flag) protein is Protein TIC 214.